Reading from the N-terminus, the 419-residue chain is Multifunctional CCA protein (419 aa).

ATP contacts are provided by Gly8 and Arg11. The CTP site is built by Gly8 and Arg11. Asp21 and Asp23 together coordinate Mg(2+). Residues Arg91, Arg137, and Arg140 each contribute to the ATP site. 3 residues coordinate CTP: Arg91, Arg137, and Arg140. Residues 226-327 (TGVHLMMVLD…VRLFDRCDAW (102 aa)) form the HD domain.

The protein belongs to the tRNA nucleotidyltransferase/poly(A) polymerase family. Bacterial CCA-adding enzyme type 1 subfamily. In terms of assembly, monomer. Can also form homodimers and oligomers. Mg(2+) is required as a cofactor. It depends on Ni(2+) as a cofactor.

The catalysed reaction is a tRNA precursor + 2 CTP + ATP = a tRNA with a 3' CCA end + 3 diphosphate. The enzyme catalyses a tRNA with a 3' CCA end + 2 CTP + ATP = a tRNA with a 3' CCACCA end + 3 diphosphate. In terms of biological role, catalyzes the addition and repair of the essential 3'-terminal CCA sequence in tRNAs without using a nucleic acid template. Adds these three nucleotides in the order of C, C, and A to the tRNA nucleotide-73, using CTP and ATP as substrates and producing inorganic pyrophosphate. tRNA 3'-terminal CCA addition is required both for tRNA processing and repair. Also involved in tRNA surveillance by mediating tandem CCA addition to generate a CCACCA at the 3' terminus of unstable tRNAs. While stable tRNAs receive only 3'-terminal CCA, unstable tRNAs are marked with CCACCA and rapidly degraded. In Leptothrix cholodnii (strain ATCC 51168 / LMG 8142 / SP-6) (Leptothrix discophora (strain SP-6)), this protein is Multifunctional CCA protein.